A 305-amino-acid chain; its full sequence is tRNA pseudouridine synthase B (305 aa).

The active-site Nucleophile is Asp-48.

This sequence belongs to the pseudouridine synthase TruB family. Type 1 subfamily.

The enzyme catalyses uridine(55) in tRNA = pseudouridine(55) in tRNA. Its function is as follows. Responsible for synthesis of pseudouridine from uracil-55 in the psi GC loop of transfer RNAs. The protein is tRNA pseudouridine synthase B of Mannheimia succiniciproducens (strain KCTC 0769BP / MBEL55E).